Consider the following 310-residue polypeptide: Ribosomal RNA small subunit methyltransferase H (310 aa).

S-adenosyl-L-methionine contacts are provided by residues 33–35 (AGH), Asp53, Tyr83, Asp100, and Gln107.

It belongs to the methyltransferase superfamily. RsmH family.

It is found in the cytoplasm. It carries out the reaction cytidine(1402) in 16S rRNA + S-adenosyl-L-methionine = N(4)-methylcytidine(1402) in 16S rRNA + S-adenosyl-L-homocysteine + H(+). In terms of biological role, specifically methylates the N4 position of cytidine in position 1402 (C1402) of 16S rRNA. This is Ribosomal RNA small subunit methyltransferase H from Clostridium perfringens (strain ATCC 13124 / DSM 756 / JCM 1290 / NCIMB 6125 / NCTC 8237 / Type A).